A 468-amino-acid chain; its full sequence is uncharacterized protein (468 aa).

The segment at 1–22 is disordered; that stretch reads MVKRSSHRQVVLDEDDEENYNN. An RING-type zinc finger spans residues 85–123; it reads CPICTEALQRPFTTHCGHTYCYECLLNWLKESKSCPTCR. The segment covering 386–402 has biased composition (low complexity); it reads DSLNSSSNNSPSHNNIH. The tract at residues 386–468 is disordered; that stretch reads DSLNSSSNNS…TIQLDSDEES (83 aa). Residues 417–434 are compositionally biased toward polar residues; the sequence is IVTNGTGLRSSQSSSQNR.

It localises to the nucleus. This is an uncharacterized protein from Schizosaccharomyces pombe (strain 972 / ATCC 24843) (Fission yeast).